A 236-amino-acid polypeptide reads, in one-letter code: 5'-methylthioadenosine/S-adenosylhomocysteine nucleosidase (236 aa).

Glutamate 12 serves as the catalytic Proton acceptor. Residues glycine 78, methionine 153, and 174 to 175 (ME) contribute to the substrate site. Catalysis depends on aspartate 198, which acts as the Proton donor.

Belongs to the PNP/UDP phosphorylase family. MtnN subfamily.

It catalyses the reaction S-adenosyl-L-homocysteine + H2O = S-(5-deoxy-D-ribos-5-yl)-L-homocysteine + adenine. It carries out the reaction S-methyl-5'-thioadenosine + H2O = 5-(methylsulfanyl)-D-ribose + adenine. The enzyme catalyses 5'-deoxyadenosine + H2O = 5-deoxy-D-ribose + adenine. Its pathway is amino-acid biosynthesis; L-methionine biosynthesis via salvage pathway; S-methyl-5-thio-alpha-D-ribose 1-phosphate from S-methyl-5'-thioadenosine (hydrolase route): step 1/2. In terms of biological role, catalyzes the irreversible cleavage of the glycosidic bond in both 5'-methylthioadenosine (MTA) and S-adenosylhomocysteine (SAH/AdoHcy) to adenine and the corresponding thioribose, 5'-methylthioribose and S-ribosylhomocysteine, respectively. Also cleaves 5'-deoxyadenosine, a toxic by-product of radical S-adenosylmethionine (SAM) enzymes, into 5-deoxyribose and adenine. This Geobacillus thermodenitrificans (strain NG80-2) protein is 5'-methylthioadenosine/S-adenosylhomocysteine nucleosidase.